The following is a 427-amino-acid chain: Peptidase B (427 aa).

Lys-195 and Asp-200 together coordinate Mn(2+). Residue Lys-207 is part of the active site. Asp-218, Asp-277, and Glu-279 together coordinate Mn(2+). The active site involves Arg-281.

This sequence belongs to the peptidase M17 family. Homohexamer. Requires Mn(2+) as cofactor.

The protein resides in the cytoplasm. It catalyses the reaction Release of an N-terminal amino acid, Xaa, from a peptide or arylamide. Xaa is preferably Glu or Asp but may be other amino acids, including Leu, Met, His, Cys and Gln.. Probably plays an important role in intracellular peptide degradation. The sequence is that of Peptidase B from Escherichia coli O7:K1 (strain IAI39 / ExPEC).